The primary structure comprises 559 residues: Extracellular matrix protein 1 (559 aa).

The first 19 residues, 1–19 (MGTVSRAALILACLALASA), serve as a signal peptide directing secretion. 2 consecutive repeat copies span residues 170-298 (HCQQ…RPDY) and 302-424 (PCPV…YPNY). Residues 170–424 (HCQQGRRGVW…FAHLAPYPNY (255 aa)) are 2 X approximate repeats. Residue Asn-373 is glycosylated (N-linked (GlcNAc...) asparagine). 2 N-linked (GlcNAc...) (high mannose) asparagine glycosylation sites follow: Asn-463 and Asn-535. The interval 535–559 (NATGLGEQGPTRGTDANPAPGSKEE) is disordered. A Phosphoserine modification is found at Ser-556.

Interacts (via C-terminus) with HSPG2 (via C-terminus). Interacts with EFEMP1/FBLN3 and LAMB3. Interacts with MMP9. In terms of tissue distribution, expressed in the surrounding connective tissues of developing long bones, but not in the cartilage. The long isoform is expressed in a number of tissues including liver, heart and lungs. The short isoform is expressed in skin and cartilage-containing tissues such as tail and front paw. No expression is found in brain.

It localises to the secreted. The protein localises to the extracellular space. Its subcellular location is the extracellular matrix. Its function is as follows. Involved in endochondral bone formation as negative regulator of bone mineralization. Stimulates the proliferation of endothelial cells and promotes angiogenesis. Inhibits MMP9 proteolytic activity. This chain is Extracellular matrix protein 1 (Ecm1), found in Mus musculus (Mouse).